Here is a 485-residue protein sequence, read N- to C-terminus: Glycogen synthase (485 aa).

Lys-21 is an ADP-alpha-D-glucose binding site.

It belongs to the glycosyltransferase 1 family. Bacterial/plant glycogen synthase subfamily.

The catalysed reaction is [(1-&gt;4)-alpha-D-glucosyl](n) + ADP-alpha-D-glucose = [(1-&gt;4)-alpha-D-glucosyl](n+1) + ADP + H(+). It participates in glycan biosynthesis; glycogen biosynthesis. In terms of biological role, synthesizes alpha-1,4-glucan chains using ADP-glucose. The sequence is that of Glycogen synthase from Pseudomonas syringae pv. syringae (strain B728a).